The following is a 463-amino-acid chain: ATP synthase subunit beta (463 aa).

152–159 (GGAGVGKT) is an ATP binding site.

The protein belongs to the ATPase alpha/beta chains family. F-type ATPases have 2 components, CF(1) - the catalytic core - and CF(0) - the membrane proton channel. CF(1) has five subunits: alpha(3), beta(3), gamma(1), delta(1), epsilon(1). CF(0) has three main subunits: a(1), b(2) and c(9-12). The alpha and beta chains form an alternating ring which encloses part of the gamma chain. CF(1) is attached to CF(0) by a central stalk formed by the gamma and epsilon chains, while a peripheral stalk is formed by the delta and b chains.

The protein resides in the cell inner membrane. It catalyses the reaction ATP + H2O + 4 H(+)(in) = ADP + phosphate + 5 H(+)(out). Functionally, produces ATP from ADP in the presence of a proton gradient across the membrane. The catalytic sites are hosted primarily by the beta subunits. The sequence is that of ATP synthase subunit beta from Shewanella putrefaciens (strain CN-32 / ATCC BAA-453).